The sequence spans 549 residues: Formate--tetrahydrofolate ligase (549 aa).

An ATP-binding site is contributed by 60 to 67 (TPYGEGKT).

It belongs to the formate--tetrahydrofolate ligase family.

The enzyme catalyses (6S)-5,6,7,8-tetrahydrofolate + formate + ATP = (6R)-10-formyltetrahydrofolate + ADP + phosphate. It functions in the pathway one-carbon metabolism; tetrahydrofolate interconversion. The chain is Formate--tetrahydrofolate ligase from Campylobacter concisus (strain 13826).